The primary structure comprises 226 residues: Purine nucleoside phosphorylase Cj1217c (226 aa).

The Zn(2+) site is built by His-58, Cys-93, and His-109.

This sequence belongs to the purine nucleoside phosphorylase YfiH/LACC1 family. In terms of assembly, homodimer. Requires Cu(2+) as cofactor. It depends on Zn(2+) as a cofactor.

The catalysed reaction is adenosine + phosphate = alpha-D-ribose 1-phosphate + adenine. It catalyses the reaction S-methyl-5'-thioadenosine + phosphate = 5-(methylsulfanyl)-alpha-D-ribose 1-phosphate + adenine. It carries out the reaction inosine + phosphate = alpha-D-ribose 1-phosphate + hypoxanthine. The enzyme catalyses adenosine + H2O + H(+) = inosine + NH4(+). In terms of biological role, purine nucleoside enzyme that catalyzes the phosphorolysis of adenosine and inosine nucleosides, yielding D-ribose 1-phosphate and the respective free bases, adenine and hypoxanthine. Also catalyzes the phosphorolysis of S-methyl-5'-thioadenosine into adenine and S-methyl-5-thio-alpha-D-ribose 1-phosphate. Also has adenosine deaminase activity. The protein is Purine nucleoside phosphorylase Cj1217c of Campylobacter jejuni subsp. jejuni serotype O:2 (strain ATCC 700819 / NCTC 11168).